We begin with the raw amino-acid sequence, 313 residues long: Putative olfactory receptor 2B3 (313 aa).

Residues 1–25 (MNWENESSPKEFILLGFSDRAWLQM) are Extracellular-facing. A glycan (N-linked (GlcNAc...) asparagine) is linked at Asn-5. The chain crosses the membrane as a helical span at residues 26-49 (PLFVVLLISYTITIFGNVSIMMVC). Residues 50-57 (ILDPKLHT) lie on the Cytoplasmic side of the membrane. The chain crosses the membrane as a helical span at residues 58 to 79 (PMYFFLTNLSILDLCYTTTTVP). The Extracellular portion of the chain corresponds to 80–100 (HMLVNIGCNKKTISYAGCVAH). Cys-97 and Cys-189 are joined by a disulfide. Residues 101–120 (LIIFLALGATECLLLAVMSF) form a helical membrane-spanning segment. The Cytoplasmic portion of the chain corresponds to 121 to 139 (DRYVAVCRPLHYVVIMNYW). A helical membrane pass occupies residues 140 to 158 (FCLRMAAFSWLIGFGNSVL). The Extracellular portion of the chain corresponds to 159 to 195 (QSSLTLNMPRCGHQEVDHFFCEVPALLKLSCADTKPI). Residues 196 to 219 (EAELFFFSVLILLIPVTLILISYG) form a helical membrane-spanning segment. The Cytoplasmic portion of the chain corresponds to 220 to 236 (FIAQAVLKIRSAEGRQK). Residues 237 to 259 (AFGTCGSHMIVVSLFYGTAIYMY) traverse the membrane as a helical segment. At 260–272 (LQPPSSTSKDWGK) the chain is on the extracellular side. Residues 273–292 (MVSLFYGIITSMLNSLIYSL) form a helical membrane-spanning segment. The Cytoplasmic segment spans residues 293–313 (RNKDMKEAFKRLMPRIFFCKK).

It belongs to the G-protein coupled receptor 1 family.

The protein localises to the cell membrane. In terms of biological role, odorant receptor. The sequence is that of Putative olfactory receptor 2B3 (OR2B3) from Homo sapiens (Human).